Here is a 282-residue protein sequence, read N- to C-terminus: Phosphoglycerate mutase-like protein 1 (282 aa).

Residue H23 is the Tele-phosphohistidine intermediate of the active site. Residue E135 is the Proton donor/acceptor of the active site.

The protein belongs to the phosphoglycerate mutase family.

Functionally, may play a role in carbohydrates metabolism. The sequence is that of Phosphoglycerate mutase-like protein 1 from Arabidopsis thaliana (Mouse-ear cress).